The following is a 932-amino-acid chain: 3-hydroxy-3-methylglutaryl-coenzyme A reductase (932 aa).

Transmembrane regions (helical) follow at residues 20-40 (VIVC…FTGL), 59-79 (LSSD…YLYL), 92-112 (ILGI…SAVI), 113-133 (HLFG…LLLI), 162-182 (MAIL…VISI), and 193-213 (VFCC…MTFF). N279 carries N-linked (GlcNAc...) asparagine glycosylation. A helical membrane pass occupies residues 322 to 342 (ILTAILATVLASHYIFFSDLA). Positions 343–467 (TYPEKRVSIM…APRPMPELLE (125 aa)) are linker. Residues 357 to 367 (VVNPGSDHEDA) are compositionally biased toward basic and acidic residues. The interval 357 to 442 (VVNPGSDHED…SGSEDEEEEV (86 aa)) is disordered. Over residues 374–403 (GTLSSSPSTSDVRVIESMTSRTQACQTDPV) the composition is skewed to polar residues. The span at 406–421 (SPRNSRSSSPVSSHSV) shows a compositional bias: low complexity. The interval 468-932 (ILNVGKGPNA…APGTCTANAS (465 aa)) is catalytic. Catalysis depends on charge relay system residues E575, K707, and D783. N850 carries N-linked (GlcNAc...) asparagine glycosylation. H882 functions as the Proton donor in the catalytic mechanism. An N-linked (GlcNAc...) asparagine glycan is attached at N886. S888 carries the phosphoserine; by AMPK modification.

The protein belongs to the HMG-CoA reductase family.

The protein localises to the endoplasmic reticulum membrane. It catalyses the reaction (R)-mevalonate + 2 NADP(+) + CoA = (3S)-3-hydroxy-3-methylglutaryl-CoA + 2 NADPH + 2 H(+). It functions in the pathway metabolic intermediate biosynthesis; (R)-mevalonate biosynthesis; (R)-mevalonate from acetyl-CoA: step 3/3. Its function is as follows. This transmembrane glycoprotein is involved in the control of cholesterol biosynthesis. It is the rate-limiting enzyme of sterol biosynthesis. The protein is 3-hydroxy-3-methylglutaryl-coenzyme A reductase (HMGCR) of Strongylocentrotus purpuratus (Purple sea urchin).